Consider the following 236-residue polypeptide: MADDWESAADSEVVIRPTAAASVNKWEGEDEDEDIKDSWEDEEEKKDEEKPTKTEAPAKPKPNKALKAKLEQQARLEEEAEAQRVASLSPAEKLAEKLRLQKIQEASDLKHAQEAFGVTSTCGGLDAFNPESKEEFKEFGATLSWKVAQFRESEHFPQFVEDLVRSLCVNLSAADIKKVKMNVEILHSEKLKLEKANAKKPAGKGKGKVTLRTENDDIDGYQKYGNDFTEDYDDFM.

The segment at 1–88 (MADDWESAAD…EAEAQRVASL (88 aa)) is disordered. A compositionally biased stretch (acidic residues) spans 28 to 46 (GEDEDEDIKDSWEDEEEKK). Composition is skewed to basic and acidic residues over residues 47 to 58 (DEEKPTKTEAPA) and 68 to 77 (AKLEQQARLE).

It belongs to the eIF-3 subunit J family. As to quaternary structure, component of the eukaryotic translation initiation factor 3 (eIF-3) complex. The eIF-3 complex interacts with pix.

The protein localises to the cytoplasm. Component of the eukaryotic translation initiation factor 3 (eIF-3) complex, which is involved in protein synthesis of a specialized repertoire of mRNAs and, together with other initiation factors, stimulates binding of mRNA and methionyl-tRNAi to the 40S ribosome. The eIF-3 complex specifically targets and initiates translation of a subset of mRNAs involved in cell proliferation. This Drosophila erecta (Fruit fly) protein is Eukaryotic translation initiation factor 3 subunit J.